An 84-amino-acid chain; its full sequence is Putative membrane protein insertion efficiency factor (84 aa).

It belongs to the UPF0161 family.

It is found in the cell inner membrane. Functionally, could be involved in insertion of integral membrane proteins into the membrane. The chain is Putative membrane protein insertion efficiency factor from Nostoc sp. (strain PCC 7120 / SAG 25.82 / UTEX 2576).